A 336-amino-acid polypeptide reads, in one-letter code: Aspartate--ammonia ligase (336 aa).

Belongs to the class-II aminoacyl-tRNA synthetase family. AsnA subfamily.

The protein localises to the cytoplasm. It carries out the reaction L-aspartate + NH4(+) + ATP = L-asparagine + AMP + diphosphate + H(+). It participates in amino-acid biosynthesis; L-asparagine biosynthesis; L-asparagine from L-aspartate (ammonia route): step 1/1. The chain is Aspartate--ammonia ligase from Lactobacillus acidophilus (strain ATCC 700396 / NCK56 / N2 / NCFM).